A 232-amino-acid polypeptide reads, in one-letter code: Uracil phosphoribosyltransferase (232 aa).

38–42 is a GTP binding site; sequence KGLVK. 5-phospho-alpha-D-ribose 1-diphosphate contacts are provided by residues R87, R112, and 140–148; that span reads DPMIATGST. Uracil contacts are provided by residues I204 and 209–211; that span reads GDA. 5-phospho-alpha-D-ribose 1-diphosphate is bound at residue D210.

This sequence belongs to the UPRTase family. Requires Mg(2+) as cofactor.

The catalysed reaction is UMP + diphosphate = 5-phospho-alpha-D-ribose 1-diphosphate + uracil. Its pathway is pyrimidine metabolism; UMP biosynthesis via salvage pathway; UMP from uracil: step 1/1. With respect to regulation, allosterically activated by GTP. Its function is as follows. Catalyzes the conversion of uracil and 5-phospho-alpha-D-ribose 1-diphosphate (PRPP) to UMP and diphosphate. The protein is Uracil phosphoribosyltransferase of Thermococcus sibiricus (strain DSM 12597 / MM 739).